A 1463-amino-acid chain; its full sequence is MLLSPSLLLLLLLGAPRGCAEGVAAALTPERLLEWQDKGIFVIQSESLKKCIQAGKSVLTLENCKQANKHMLWKWVSNHGLFNIGGSGCLGLNFSAPEQPLSLYECDSTLVSLRWRCNRKMITGPLQYSVQVAHDNTVVASRKYIHKWISYGSGGGDICEYLHKDLHTIKGNTHGMPCMFPFQYNHQWHHECTREGREDDLLWCATTSRYERDEKWGFCPDPTSAEVGCDTIWEKDLNSHICYQFNLLSSLSWSEAHSSCQMQGGTLLSITDETEENFIREHMSSKTVEVWMGLNQLDEHAGWQWSDGTPLNYLNWSPEVNFEPFVEDHCGTFSSFMPSAWRSRDCESTLPYICKKYLNHIDHEIVEKDAWKYYATHCEPGWNPYNRNCYKLQKEEKTWHEALRSCQADNSALIDITSLAEVEFLVTLLGDENASETWIGLSSNKIPVSFEWSNDSSVIFTNWHTLEPHIFPNRSQLCVSAEQSEGHWKVKNCEERLFYICKKAGHVLSDAESGCQEGWERHGGFCYKIDTVLRSFDQASSGYYCPPALVTITNRFEQAFITSLISSVVKMKDSYFWIALQDQNDTGEYTWKPVGQKPEPVQYTHWNTHQPRYSGGCVAMRGRHPLGRWEVKHCRHFKAMSLCKQPVENQEKAEYEERWPFHPCYLDWESEPGLASCFKVFHSEKVLMKRTWREAEAFCEEFGAHLASFAHIEEENFVNELLHSKFNWTEERQFWIGFNKRNPLNAGSWEWSDRTPVVSSFLDNTYFGEDARNCAVYKANKTLLPLHCGSKREWICKIPRDVKPKIPFWYQYDVPWLFYQDAEYLFHTFASEWLNFEFVCSWLHSDLLTIHSAHEQEFIHSKIKALSKYGASWWIGLQEERANDEFRWRDGTPVIYQNWDTGRERTVNNQSQRCGFISSITGLWGSEECSVSMPSICKRKKVWLIEKKKDTPKQHGTCPKGWLYFNYKCLLLNIPKDPSSWKNWTHAQHFCAEEGGTLVAIESEVEQAFITMNLFGQTTSVWIGLQNDDYETWLNGKPVVYSNWSPFDIINIPSHNTTEVQKHIPLCALLSSNPNFHFTGKWYFEDCGKEGYGFVCEKMQDTSGHGVNTSDMYPMPNTLEYGNRTYKIINANMTWYAAIKTCLMHKAQLVSITDQYHQSFLTVVLNRLGYAHWIGLFTTDNGLNFDWSDGTKSSFTFWKDEESSLLGDCVFADSNGRWHSTACESFLQGAICHVPPETRQSEHPELCSETSIPWIKFKSNCYSFSTVLDSMSFEAAHEFCKKEGSNLLTIKDEAENAFLLEELFAFGSSVQMVWLNAQFDGNNETIKWFDGTPTDQSNWGIRKPDTDYFKPHHCVALRIPEGLWQLSPCQEKKGFICKMEADIHTAEALPEKGPSHSIIPLAVVLTLIVIVAICTLSFCIYKHNGGFFRRLAGFRNPYYPATNFSTVYLEENILISDLEKSDQ.

An N-terminal signal peptide occupies residues 1-20 (MLLSPSLLLLLLLGAPRGCA). The Extracellular portion of the chain corresponds to 21-1397 (EGVAAALTPE…ALPEKGPSHS (1377 aa)). The 124-residue stretch at 38 to 161 (KGIFVIQSES…GSGGGDICEY (124 aa)) folds into the Ricin B-type lectin domain. Cystine bridges form between Cys51/Cys64, Cys89/Cys106, Cys178/Cys204, Cys192/Cys219, Cys260/Cys354, Cys330/Cys346, Cys406/Cys501, Cys478/Cys493, Cys617/Cys634, Cys699/Cys796, Cys774/Cys788, Cys840/Cys937, Cys914/Cys929, and Cys1067/Cys1087. Asn93 carries an N-linked (GlcNAc...) asparagine glycan. One can recognise a Fibronectin type-II domain in the interval 173-221 (THGMPCMFPFQYNHQWHHECTREGREDDLLWCATTSRYERDEKWGFCPD). 8 C-type lectin domains span residues 238 to 355 (NSHI…YICK), 385 to 502 (YNRN…YICK), 522 to 643 (HGGF…MSLC), 673 to 797 (GLAS…WICK), 819 to 938 (YQDA…SICK), 965 to 1096 (FNYK…GFVC), 1121 to 1232 (YGNR…GAIC), and 1257 to 1378 (FKSN…FICK). N-linked (GlcNAc...) asparagine glycosylation occurs at Asn454. Asn1123 carries an N-linked (GlcNAc...) asparagine glycan. 3 cysteine pairs are disulfide-bonded: Cys1209–Cys1223, Cys1280–Cys1377, and Cys1354–Cys1369. The helical transmembrane segment at 1398-1418 (IIPLAVVLTLIVIVAICTLSF) threads the bilayer. Residues 1419–1463 (CIYKHNGGFFRRLAGFRNPYYPATNFSTVYLEENILISDLEKSDQ) are Cytoplasmic-facing. Positions 1436 to 1442 (NPYYPAT) match the Endocytosis signal motif.

In terms of assembly, interacts with sPLA2-IB/PLA2G1B; this interaction mediates intracellular signaling as well as clearance of extracellular sPLA2-IB/PLA2G1B via endocytotic pathway. Interacts with sPLA2-X/PLA2G10; this interaction mediates sPLA2-X/PLA2G10 clearance and inactivation. Post-translationally, the secretory phospholipase A2 receptor form may be produced by the action of metalloproteinases. It contains all extracellular domains and only lacks transmembrane and cytosolic regions. It is however unclear whether this form is produced by proteolytic cleavage as suggested by some experiments, or by alternative splicing, as in the case of isoform 2 that shares all characteristics of secretory phospholipase A2 receptor form. Expressed in podocytes (at protein level). Present in lung macrophage (at protein level). Highly expressed in kidney. Also expressed in pancreas, amnion, choriodecidua and placenta. Isoform 2 is expressed at much lower level.

It is found in the cell membrane. Its subcellular location is the secreted. Functionally, receptor for secretory phospholipase A2 (sPLA2). Acts as a receptor for phospholipase sPLA2-IB/PLA2G1B but not sPLA2-IIA/PLA2G2A. Also able to bind to snake PA2-like toxins. Although its precise function remains unclear, binding of sPLA2 to its receptor participates in both positive and negative regulation of sPLA2 functions as well as clearance of sPLA2. Binding of sPLA2-IB/PLA2G1B induces various effects depending on the cell type, such as activation of the mitogen-activated protein kinase (MAPK) cascade to induce cell proliferation, the production of lipid mediators, selective release of arachidonic acid in bone marrow-derived mast cells. In neutrophils, binding of sPLA2-IB/PLA2G1B can activate p38 MAPK to stimulate elastase release and cell adhesion. May be involved in responses in pro-inflammatory cytokine productions during endotoxic shock. Also has endocytic properties and rapidly internalizes sPLA2 ligands, which is particularly important for the clearance of extracellular sPLA2s to protect their potent enzymatic activities. The soluble secretory phospholipase A2 receptor form is circulating and acts as a negative regulator of sPLA2 functions by blocking the biological functions of sPLA2-IB/PLA2G1B. In podocytes, binding of sPLA2-IB/PLA2G1B can regulate podocyte survival and glomerular homeostasis. The chain is Secretory phospholipase A2 receptor (PLA2R1) from Homo sapiens (Human).